The chain runs to 253 residues: Sporulated oocyst TA4 antigen (253 aa).

An N-terminal signal peptide occupies residues 1-23; that stretch reads MARLSFVSLLSLSLLFGQQAVRA. Residues 182 to 184 constitute a propeptide, removed in mature form; it reads RRL.

The TA4 antigen is composed of a 17 kDa and a 8 kDa chain, linked by a disulfide bond.

The chain is Sporulated oocyst TA4 antigen from Eimeria tenella (Coccidian parasite).